The primary structure comprises 189 residues: Resolvase (189 aa).

A Resolvase/invertase-type recombinase catalytic domain is found at 1–139; it reads MLVGYARVST…EGLKSAKARG (139 aa). Catalysis depends on serine 9, which acts as the O-(5'-phospho-DNA)-serine intermediate. The disordered stretch occupies residues 130 to 151; sequence EGLKSAKARGRNGGRPSKRNDK. Residues 165 to 184 constitute a DNA-binding region (H-T-H motif); the sequence is IVDIVKQTGLSRATVYRVLN.

This sequence belongs to the site-specific recombinase resolvase family.

Functionally, a likely role for the res protein would be to stabilize pIP404 by reducing the number of plasmid multimers resulting from homologous recombination. The protein is Resolvase (res) of Clostridium perfringens.